We begin with the raw amino-acid sequence, 582 residues long: Transcription factor PCF5 (582 aa).

2 disordered regions span residues 30–78 and 123–195; these read AAGK…QHDH and SPMG…GGGG. The segment covering 51–64 has biased composition (gly residues); that stretch reads GGDGGGVGGGGSGG. The 59-residue stretch at 213 to 271 folds into the TCP domain; sequence RKDRHSKVCTARGPRDRRVRLSAHTAIQFYDVQDRLGYDRPSKAVDWLIKNAKDAIDKL. Disordered regions lie at residues 283-306, 402-423, and 548-582; these read GAGAGNAAAPPSSSTHPDSAENSD, MFHHQQHRHGGGGGGGNGTTQQ, and RLPARIQGDEEHNGGGGGNGDKPPPPSSVSSASHH.

In terms of assembly, forms homodimers and heterodimers with PCF2.

It is found in the nucleus. Its function is as follows. Transcription activator. Binds the promoter core sequence 5'-GGNCC-3'. The chain is Transcription factor PCF5 (PCF5) from Oryza sativa subsp. indica (Rice).